A 159-amino-acid polypeptide reads, in one-letter code: Ribosome maturation factor RimM (159 aa).

One can recognise a PRC barrel domain in the interval 86–159; it reads SDAFHLPKLI…IHIETIEGLI (74 aa).

This sequence belongs to the RimM family. Binds ribosomal protein uS19.

It localises to the cytoplasm. Its function is as follows. An accessory protein needed during the final step in the assembly of 30S ribosomal subunit, possibly for assembly of the head region. Essential for efficient processing of 16S rRNA. May be needed both before and after RbfA during the maturation of 16S rRNA. It has affinity for free ribosomal 30S subunits but not for 70S ribosomes. The sequence is that of Ribosome maturation factor RimM from Acholeplasma laidlawii (strain PG-8A).